The primary structure comprises 183 residues: Photosystem I assembly protein Ycf4 (183 aa).

2 helical membrane-spanning segments follow: residues 23 to 43 (WASVVFLGAIGFLFTGLSSYF) and 64 to 84 (VMSFYGILGLLLSIYLWLTII).

This sequence belongs to the Ycf4 family.

Its subcellular location is the plastid. The protein resides in the chloroplast thylakoid membrane. Seems to be required for the assembly of the photosystem I complex. The chain is Photosystem I assembly protein Ycf4 from Stigeoclonium helveticum (Green alga).